A 279-amino-acid polypeptide reads, in one-letter code: Large ribosomal subunit protein uL3 (279 aa).

Glutamine 151 carries the post-translational modification N5-methylglutamine.

It belongs to the universal ribosomal protein uL3 family. As to quaternary structure, part of the 50S ribosomal subunit. Forms a cluster with proteins L14 and L19. Post-translationally, methylated by PrmB.

In terms of biological role, one of the primary rRNA binding proteins, it binds directly near the 3'-end of the 23S rRNA, where it nucleates assembly of the 50S subunit. This chain is Large ribosomal subunit protein uL3, found in Dinoroseobacter shibae (strain DSM 16493 / NCIMB 14021 / DFL 12).